The primary structure comprises 355 residues: Heterogeneous nuclear ribonucleoprotein D0 (355 aa).

The segment at 1 to 91 is disordered; sequence MSEEQFGGDG…SSPRHTEAAA (91 aa). Ser2 carries the post-translational modification N-acetylserine. Residues 11–43 are compositionally biased toward low complexity; the sequence is AAAAATAAVGGSAGEQEGAMVAAAAQGPAAAAG. Gly residues predominate over residues 44 to 58; that stretch reads SGSGGGGSAAGGTEG. Positions 64-73 are enriched in basic and acidic residues; sequence EGAKIDASKN. At Ser71 the chain carries Phosphoserine. Lys72 is covalently cross-linked (Glycyl lysine isopeptide (Lys-Gly) (interchain with G-Cter in SUMO2)). Ser80, Ser82, and Ser83 each carry phosphoserine. RRM domains lie at 97-179 and 182-261; these read WKMF…KTKE and KKIF…MSKE. Lys119 carries the N6-methyllysine modification. Position 127 is a phosphothreonine (Thr127). A Glycyl lysine isopeptide (Lys-Gly) (interchain with G-Cter in SUMO2) cross-link involves residue Lys129. At Lys165 the chain carries N6-acetyllysine. At Ser190 the chain carries Phosphoserine. Residue Thr193 is modified to Phosphothreonine. A Glycyl lysine isopeptide (Lys-Gly) (interchain with G-Cter in SUMO2) cross-link involves residue Lys197. N6-acetyllysine is present on residues Lys243 and Lys251. Omega-N-methylarginine is present on residues Glu261 and Tyr263. Ser271 carries the post-translational modification Phosphoserine. Residues Arg272, Arg278, Arg280, and Arg282 each carry the omega-N-methylarginine modification. Arg345 carries the post-translational modification Asymmetric dimethylarginine; alternate. At Arg345 the chain carries Dimethylated arginine; alternate. Arg345 bears the Omega-N-methylarginine; alternate mark.

Identified in a IGF2BP1-dependent mRNP granule complex containing untranslated mRNAs. Part of a complex associated with the FOS mCRD domain and consisting of PABPC1, PAIP1, CSDE1/UNR and SYNCRIP. Interacts with IGF2BP2. Interacts with GTPBP1. Interacts with EIF4G1; the interaction requires RNA. Interacts with EIF3B and RPS3. Methylated by PRMT1, in an insulin-dependent manner. The PRMT1-mediated methylation regulates its phosphorylation. Post-translationally, arg-345 is dimethylated, probably to asymmetric dimethylarginine.

The protein localises to the nucleus. It is found in the cytoplasm. In terms of biological role, binds with high affinity to RNA molecules that contain AU-rich elements (AREs) found within the 3'-UTR of many proto-oncogenes and cytokine mRNAs. Also binds to double- and single-stranded DNA sequences in a specific manner and functions a transcription factor. Each of the RNA-binding domains specifically can bind solely to a single-stranded non-monotonous 5'-UUAG-3' sequence and also weaker to the single-stranded 5'-TTAGGG-3' telomeric DNA repeat. Binds RNA oligonucleotides with 5'-UUAGGG-3' repeats more tightly than the telomeric single-stranded DNA 5'-TTAGGG-3' repeats. Binding of RRM1 to DNA inhibits the formation of DNA quadruplex structure which may play a role in telomere elongation. May be involved in translationally coupled mRNA turnover. Implicated with other RNA-binding proteins in the cytoplasmic deadenylation/translational and decay interplay of the FOS mRNA mediated by the major coding-region determinant of instability (mCRD) domain. May play a role in the regulation of the rhythmic expression of circadian clock core genes. Directly binds to the 3'UTR of CRY1 mRNA and induces CRY1 rhythmic translation. May also be involved in the regulation of PER2 translation. The chain is Heterogeneous nuclear ribonucleoprotein D0 (Hnrnpd) from Mus musculus (Mouse).